A 262-amino-acid polypeptide reads, in one-letter code: Phosphatidylglycerol--prolipoprotein diacylglyceryl transferase (262 aa).

Transmembrane regions (helical) follow at residues 9 to 29, 41 to 61, 80 to 100, and 109 to 129; these read LGPL…ILAV, IIPD…ILGA, IFAI…GALV, and LINT…AQSL. Arg-131 is a binding site for a 1,2-diacyl-sn-glycero-3-phospho-(1'-sn-glycerol). The next 3 helical transmembrane spans lie at 167-187, 197-217, and 226-246; these read QPTF…ILIF, GHIT…IEGM, and GLRV…MIVI.

It belongs to the Lgt family.

It is found in the cell membrane. The catalysed reaction is L-cysteinyl-[prolipoprotein] + a 1,2-diacyl-sn-glycero-3-phospho-(1'-sn-glycerol) = an S-1,2-diacyl-sn-glyceryl-L-cysteinyl-[prolipoprotein] + sn-glycerol 1-phosphate + H(+). It functions in the pathway protein modification; lipoprotein biosynthesis (diacylglyceryl transfer). Functionally, catalyzes the transfer of the diacylglyceryl group from phosphatidylglycerol to the sulfhydryl group of the N-terminal cysteine of a prolipoprotein, the first step in the formation of mature lipoproteins. The sequence is that of Phosphatidylglycerol--prolipoprotein diacylglyceryl transferase from Streptococcus pneumoniae (strain ATCC 700669 / Spain 23F-1).